The primary structure comprises 182 residues: UPF0423 protein BRA0381/BS1330_II0378 (182 aa).

The N-terminal stretch at 1–24 (MKNLFRTAALMVPLSLALAYGAQA) is a signal peptide.

The protein belongs to the UPF0423 family.

The protein is UPF0423 protein BRA0381/BS1330_II0378 of Brucella suis biovar 1 (strain 1330).